A 466-amino-acid chain; its full sequence is tRNA-2-methylthio-N(6)-dimethylallyladenosine synthase (466 aa).

An MTTase N-terminal domain is found at 21 to 137; the sequence is GSYWITTFGC…LEDLLNQVDN (117 aa). C30, C66, C100, C172, C176, and C179 together coordinate [4Fe-4S] cluster. The region spanning 158–395 is the Radical SAM core domain; it reads RDSNICAWVN…NLLVEQTAKD (238 aa). The 69-residue stretch at 398 to 466 folds into the TRAM domain; that stretch reads TRYHNQIVEV…AFSLTGSPIQ (69 aa).

The protein belongs to the methylthiotransferase family. MiaB subfamily. Monomer. The cofactor is [4Fe-4S] cluster.

The protein localises to the cytoplasm. It carries out the reaction N(6)-dimethylallyladenosine(37) in tRNA + (sulfur carrier)-SH + AH2 + 2 S-adenosyl-L-methionine = 2-methylsulfanyl-N(6)-dimethylallyladenosine(37) in tRNA + (sulfur carrier)-H + 5'-deoxyadenosine + L-methionine + A + S-adenosyl-L-homocysteine + 2 H(+). Its function is as follows. Catalyzes the methylthiolation of N6-(dimethylallyl)adenosine (i(6)A), leading to the formation of 2-methylthio-N6-(dimethylallyl)adenosine (ms(2)i(6)A) at position 37 in tRNAs that read codons beginning with uridine. In Prochlorococcus marinus (strain SARG / CCMP1375 / SS120), this protein is tRNA-2-methylthio-N(6)-dimethylallyladenosine synthase.